We begin with the raw amino-acid sequence, 454 residues long: Ig mu chain C region (454 aa).

A CH1 region spans residues 1-105 (SPSSPTVFPL…NKDLRVPIPV (105 aa)). A disulfide bridge connects residues C27 and C88. 7 N-linked (GlcNAc...) asparagine glycosylation sites follow: N45, N112, N192, N210, N238, N257, and N280. The interval 106 to 218 (VTEMNPNVSV…KNVSSTCAAS (113 aa)) is CH2. An intrachain disulfide couples C135 to C198. Residues 219 to 324 (PSTDIQAFPI…QKKFISKPRE (106 aa)) form a CH3 region. Disulfide bonds link C245–C304 and C352–C414. A CH4 region spans residues 325 to 454 (MNKTPPAVYQ…IMSDAGGTCY (130 aa)). The N-linked (GlcNAc...) asparagine glycan is linked to N441.

In Mesocricetus auratus (Golden hamster), this protein is Ig mu chain C region.